A 483-amino-acid chain; its full sequence is MAYIESNSGKWEYVIGLEIHAQISSKSKLFSGSGTTFAASPNSQVSYVDAAMPGMLPVLNEYCVHQAIKTGLGLKAKVNKYSVFDRKNYFYADLPQGYQISQFYYPIVQDGTMEIPTSTGELKTIRINRLHLEQDAGKSMHDQSPHYSFIDLNRAGIGLMEIVTEPDISSPDEAAEFVKKLRSLLRYVGSCDGDMEKGSMRCDANVSVRRKGEPLGTRCEIKNINSIRNIVRAIEFEAKRQVDLIENGESVIQETRLFNADSGETRTMRSKEEAADYRYFPDPDLLPVILSDELINELKASLPELPDQKIDKYITKFGLSKYDAEVIVADESAAKYFEEAANECDPKLLANWLINELFGQLNKASAEISECKITPNDFAKLIKLIEDNTISGKIAKTVFEIMFETGKAADKIVEEQGLVQVSDSNVLNTVIDEVIRENPDSVEGYKGGKDKLFGFFVGQVMKKTGGKANPGLVNQLLKEKLGS.

Belongs to the GatB/GatE family. GatB subfamily. In terms of assembly, heterotrimer of A, B and C subunits.

It carries out the reaction L-glutamyl-tRNA(Gln) + L-glutamine + ATP + H2O = L-glutaminyl-tRNA(Gln) + L-glutamate + ADP + phosphate + H(+). The enzyme catalyses L-aspartyl-tRNA(Asn) + L-glutamine + ATP + H2O = L-asparaginyl-tRNA(Asn) + L-glutamate + ADP + phosphate + 2 H(+). Functionally, allows the formation of correctly charged Asn-tRNA(Asn) or Gln-tRNA(Gln) through the transamidation of misacylated Asp-tRNA(Asn) or Glu-tRNA(Gln) in organisms which lack either or both of asparaginyl-tRNA or glutaminyl-tRNA synthetases. The reaction takes place in the presence of glutamine and ATP through an activated phospho-Asp-tRNA(Asn) or phospho-Glu-tRNA(Gln). The chain is Aspartyl/glutamyl-tRNA(Asn/Gln) amidotransferase subunit B from Rickettsia bellii (strain RML369-C).